Here is a 615-residue protein sequence, read N- to C-terminus: Medium-chain acyl-CoA ligase ACSF2, mitochondrial (615 aa).

The transit peptide at 1 to 41 directs the protein to the mitochondrion; the sequence is MAVYHGMLRFGRLCIASLGARGPRTLLSRPRPNSKLQSVRA. Lys179 bears the N6-acetyllysine mark. Lys182 carries the N6-acetyllysine; alternate modification. Lys182 bears the N6-succinyllysine; alternate mark. Residue Lys199 is modified to N6-acetyllysine. Position 263 to 271 (263 to 271) interacts with ATP; it reads TSGTTGNPK. Residues Lys340 and Lys398 each carry the N6-acetyllysine modification. The residue at position 478 (Lys478) is an N6-succinyllysine. ATP contacts are provided by Asp493 and Arg508. The residue at position 510 (Lys510) is an N6-acetyllysine. Lys544 and Lys570 each carry N6-acetyllysine; alternate. An N6-succinyllysine; alternate mark is found at Lys544 and Lys570. Lys599 serves as a coordination point for ATP. The residue at position 599 (Lys599) is an N6-succinyllysine.

The protein belongs to the ATP-dependent AMP-binding enzyme family.

Its subcellular location is the mitochondrion. It carries out the reaction a medium-chain fatty acid + ATP + CoA = a medium-chain fatty acyl-CoA + AMP + diphosphate. It catalyses the reaction octanoate + ATP + CoA = octanoyl-CoA + AMP + diphosphate. Its function is as follows. Acyl-CoA synthases catalyze the initial reaction in fatty acid metabolism, by forming a thioester with CoA. Has some preference toward medium-chain substrates. Plays a role in adipocyte differentiation. The sequence is that of Medium-chain acyl-CoA ligase ACSF2, mitochondrial from Mus musculus (Mouse).